A 279-amino-acid polypeptide reads, in one-letter code: MTFDASGRLPEAFLTPGGSSFMDFLAGHAPDLLPGRRSLGTGDLSKDVPHGTTIVAATFDGGVVMAGDRRATMGNIIAQRDIEKVFPADEYSCVGIAGSAGLAIEMVRLFQVELEHYEKLEGTTLSLDGKANRLSALIRGNLAMAMQGLAVVPLFAGYDHDISGGRIFSYDPTGGRYEEQAFHSVGSGSLFARGSLKKLYRESMSAAECVTATIQALYDAADDDSATGGPDMARRIFPVIGVVTADGYQRMPEAEVGEIVDSVVGARLQRPDGPAAPLS.

The propeptide at 1–51 (MTFDASGRLPEAFLTPGGSSFMDFLAGHAPDLLPGRRSLGTGDLSKDVPHG) is removed in mature form; by autocatalysis. Threonine 52 (nucleophile) is an active-site residue.

The protein belongs to the peptidase T1B family. The 20S proteasome core is composed of 14 alpha and 14 beta subunits that assemble into four stacked heptameric rings, resulting in a barrel-shaped structure. The two inner rings, each composed of seven catalytic beta subunits, are sandwiched by two outer rings, each composed of seven alpha subunits. The catalytic chamber with the active sites is on the inside of the barrel. Has a gated structure, the ends of the cylinder being occluded by the N-termini of the alpha-subunits. Is capped by the proteasome-associated ATPase, ARC.

Its subcellular location is the cytoplasm. It catalyses the reaction Cleavage of peptide bonds with very broad specificity.. It participates in protein degradation; proteasomal Pup-dependent pathway. Its activity is regulated as follows. The formation of the proteasomal ATPase ARC-20S proteasome complex, likely via the docking of the C-termini of ARC into the intersubunit pockets in the alpha-rings, may trigger opening of the gate for substrate entry. Interconversion between the open-gate and close-gate conformations leads to a dynamic regulation of the 20S proteasome proteolysis activity. Component of the proteasome core, a large protease complex with broad specificity involved in protein degradation. The polypeptide is Proteasome subunit beta (Kribbella flavida (strain DSM 17836 / JCM 10339 / NBRC 14399)).